The chain runs to 226 residues: 3-isopropylmalate dehydratase small subunit (226 aa).

Residues 204–226 form a disordered region; it reads EAETVESAREPEAVEWAGPLADR.

The protein belongs to the LeuD family. LeuD type 1 subfamily. In terms of assembly, heterodimer of LeuC and LeuD.

The catalysed reaction is (2R,3S)-3-isopropylmalate = (2S)-2-isopropylmalate. The protein operates within amino-acid biosynthesis; L-leucine biosynthesis; L-leucine from 3-methyl-2-oxobutanoate: step 2/4. Functionally, catalyzes the isomerization between 2-isopropylmalate and 3-isopropylmalate, via the formation of 2-isopropylmaleate. The sequence is that of 3-isopropylmalate dehydratase small subunit from Bifidobacterium animalis subsp. lactis (strain AD011).